A 398-amino-acid polypeptide reads, in one-letter code: KiSS-1 receptor (398 aa).

The Extracellular segment spans residues 1 to 46 (MHTVATSGPNASWGAPANASGCPGCGANASDGPVPSPRAVDAWLVP). Residues Asn10, Asn18, and Asn28 are each glycosylated (N-linked (GlcNAc...) asparagine). The helical transmembrane segment at 47-67 (LFFAALMLLGLVGNSLVIYVI) threads the bilayer. Residues 68 to 78 (CRHKPMRTVTN) are Cytoplasmic-facing. A helical membrane pass occupies residues 79–101 (FYIANLAATDVTFLLCCVPFTAL). Residues 102-120 (LYPLPGWVLGDFMCKFVNY) lie on the Extracellular side of the membrane. A disulfide bridge links Cys115 with Cys191. A helical transmembrane segment spans residues 121-138 (IQQVSVQATCATLTAMSV). Residues 139–157 (DRWYVTVFPLRALHRRTPR) lie on the Cytoplasmic side of the membrane. A helical membrane pass occupies residues 158 to 178 (LALAVSLSIWVGSAAVSAPVL). Residues 179 to 202 (ALHRLSPGPRAYCSEAFPSRALER) lie on the Extracellular side of the membrane. A helical membrane pass occupies residues 203–223 (AFALYNLLALYLLPLLATCAC). Residues 224-263 (YAAMLRHLGRVAVRPAPADSALQGQVLAERAGAVRAKVSR) are Cytoplasmic-facing. Residues 264 to 284 (LVAAVVLLFAACWGPIQLFLV) traverse the membrane as a helical segment. Residues 285–305 (LQALGPAGSWHPRSYAAYALK) are Extracellular-facing. Residues 306–328 (TWAHCMSYSNSALNPLLYAFLGS) traverse the membrane as a helical segment. At 329-398 (HFRQAFRRVC…CVLGEDNAPL (70 aa)) the chain is on the cytoplasmic side. Residues 341–363 (APRRPRRPRRPGPSDPAAPHAEL) form a disordered region.

Belongs to the G-protein coupled receptor 1 family. Most highly expressed in the pancreas, placenta and spinal cord, with lower-level of expression in peripheral blood leukocytes, kidney, lung, fetal liver, stomach, small intestine, testes, spleen, thymus, adrenal glands and lymph nodes. In the adult brain, expressed in the superior frontal gyrus, putamen, caudate nucleus, cingulate gyrus, nucleus accumbens, hippocampus, pons and amygdala, as well as the hypothalamus and pituitary. Expression levels are higher in early (7-9 weeks) than term placentas. Expression levels were increased in both early placentas and molar pregnancies and were reduced in choriocarcinoma cells. Expressed at higher levels in first trimester trophoblasts than at term of gestation. Also found in the extravillous trophoblast suggesting endocrine/paracrine activation mechanism.

Its subcellular location is the cell membrane. In terms of biological role, receptor for metastin (kisspeptin-54 or kp-54), a C-terminally amidated peptide of KiSS1. KiSS1 is a metastasis suppressor protein that suppresses metastases in malignant melanomas and in some breast carcinomas without affecting tumorigenicity. The metastasis suppressor properties may be mediated in part by cell cycle arrest and induction of apoptosis in malignant cells. The receptor is essential for normal gonadotropin-released hormone physiology and for puberty. The hypothalamic KiSS1/KISS1R system is a pivotal factor in central regulation of the gonadotropic axis at puberty and in adulthood. The receptor is also probably involved in the regulation and fine-tuning of trophoblast invasion generated by the trophoblast itself. Analysis of the transduction pathways activated by the receptor identifies coupling to phospholipase C and intracellular calcium release through pertussis toxin-insensitive G(q) proteins. The polypeptide is KiSS-1 receptor (KISS1R) (Homo sapiens (Human)).